Reading from the N-terminus, the 313-residue chain is Ribosomal RNA small subunit methyltransferase H (313 aa).

S-adenosyl-L-methionine is bound by residues 48-50 (GGH), Asp-68, Phe-102, Asp-120, and Gln-127. The segment at 290–313 (TATEEEIDRNPRSRSAKLRAAARK) is disordered. A compositionally biased stretch (basic residues) spans 301 to 313 (RSRSAKLRAAARK).

It belongs to the methyltransferase superfamily. RsmH family.

It is found in the cytoplasm. The enzyme catalyses cytidine(1402) in 16S rRNA + S-adenosyl-L-methionine = N(4)-methylcytidine(1402) in 16S rRNA + S-adenosyl-L-homocysteine + H(+). Specifically methylates the N4 position of cytidine in position 1402 (C1402) of 16S rRNA. This is Ribosomal RNA small subunit methyltransferase H from Koribacter versatilis (strain Ellin345).